Consider the following 80-residue polypeptide: Exodeoxyribonuclease 7 small subunit (80 aa).

Belongs to the XseB family. As to quaternary structure, heterooligomer composed of large and small subunits.

It localises to the cytoplasm. It carries out the reaction Exonucleolytic cleavage in either 5'- to 3'- or 3'- to 5'-direction to yield nucleoside 5'-phosphates.. Its function is as follows. Bidirectionally degrades single-stranded DNA into large acid-insoluble oligonucleotides, which are then degraded further into small acid-soluble oligonucleotides. The sequence is that of Exodeoxyribonuclease 7 small subunit from Rickettsia typhi (strain ATCC VR-144 / Wilmington).